Reading from the N-terminus, the 362-residue chain is Atypical chemokine receptor 3 (362 aa).

Residues 1 to 47 (MDVHLFDYVEPGNYSDINWPCNSSDCIVVDTVQCPAMPNKNVLLYTL) lie on the Extracellular side of the membrane. N13 and N22 each carry an N-linked (GlcNAc...) asparagine glycan. The chain crosses the membrane as a helical span at residues 48 to 68 (SFIYIFIFVIGMIANSVVVWV). At 69 to 81 (NIQAKTTGYDTHC) the chain is on the cytoplasmic side. A helical membrane pass occupies residues 82 to 102 (YILNLAIADLWVVITIPVWVV). Topologically, residues 103-118 (SLVQHNQWPMGELTCK) are extracellular. C117 and C196 are oxidised to a cystine. A helical membrane pass occupies residues 119–139 (ITHLIFSINLFGSIFFLACMS). Residues 140–162 (VDRYLSITYFTSTSSYKKKMVRR) lie on the Cytoplasmic side of the membrane. Residues 163-183 (VVCVLVWLLAFFVSLPDTYYL) form a helical membrane-spanning segment. The Extracellular portion of the chain corresponds to 184–213 (KTVTSASNNETYCRSFYPEHSIKEWLIGME). Residues 214–234 (LVSVILGFAVPFTIIAIFYFL) traverse the membrane as a helical segment. The Cytoplasmic segment spans residues 235–252 (LARAMSASGDQEKHSSRK). Residues 253–273 (IIFSYVVVFLVCWLPYHFVVL) form a helical membrane-spanning segment. Topologically, residues 274–296 (LDIFSILHYIPFTCQLENVLFTA) are extracellular. The chain crosses the membrane as a helical span at residues 297 to 319 (LHVTQCLSLVHCCVNPVLYSFIN). At 320–362 (RNYRYELMKAFIFKYSAKTGLTKLIDASRVSETEYSALEQNTK) the chain is on the cytoplasmic side. The C-terminal cytoplasmic tail stretch occupies residues 324 to 362 (YELMKAFIFKYSAKTGLTKLIDASRVSETEYSALEQNTK). Phosphoserine occurs at positions 347, 350, and 355.

The protein belongs to the G-protein coupled receptor 1 family. Atypical chemokine receptor subfamily. As to quaternary structure, homodimer. Can form heterodimers with CXCR4; heterodimerization may regulate CXCR4 signaling activity. Interacts with ARRB1 and ARRB2. The Ser/Thr residues in the C-terminal cytoplasmic tail may be phosphorylated. In terms of processing, ubiquitinated at the Lys residues in its C-terminal cytoplasmic tail and is essential for correct trafficking from and to the cell membrane. Deubiquitinated by CXCL12-stimulation in a reversible manner. Expressed in vascular smooth muscle cells (at protein level). In brain, expressed in blood vessels, pyramidal cells in hippocampal subfield CA3, mature dentate gyrus granule cells, ventricle walls, olfactory bulb, accumbens shell, supraoptic, lateroanterior and ventromedial hypothalamic nuclei, medial region of thalamus, and motor nuclei, central gray and raphe magnus nucleus of brain stem. Detected in primary neurons, GABAergic neurons, astrocytes, cerebral cortex, ventral striatum and choroid plexus. Not detected in mesencephalon.

The protein resides in the cell membrane. It is found in the early endosome. It localises to the recycling endosome. Atypical chemokine receptor that controls chemokine levels and localization via high-affinity chemokine binding that is uncoupled from classic ligand-driven signal transduction cascades, resulting instead in chemokine sequestration, degradation, or transcytosis. Also known as interceptor (internalizing receptor) or chemokine-scavenging receptor or chemokine decoy receptor. Acts as a receptor for chemokines CXCL11 and CXCL12/SDF1. Chemokine binding does not activate G-protein-mediated signal transduction but instead induces beta-arrestin recruitment, leading to ligand internalization and activation of MAPK signaling pathway. Required for regulation of CXCR4 protein levels in migrating interneurons, thereby adapting their chemokine responsiveness. In glioma cells, transduces signals via MEK/ERK pathway, mediating resistance to apoptosis. Promotes cell growth and survival. Not involved in cell migration, adhesion or proliferation of normal hematopoietic progenitors but activated by CXCL11 in malignant hemapoietic cells, leading to phosphorylation of ERK1/2 (MAPK3/MAPK1) and enhanced cell adhesion and migration. Plays a regulatory role in CXCR4-mediated activation of cell surface integrins by CXCL12. Required for heart valve development. Functionally, atypical chemokine receptor that controls chemokine levels and localization via high-affinity chemokine binding that is uncoupled from classic ligand-driven signal transduction cascades, resulting instead in chemokine sequestration, degradation, or transcytosis. Also known as interceptor (internalizing receptor) or chemokine-scavenging receptor or chemokine decoy receptor. Acts as a receptor for chemokines CXCL11 and CXCL12/SDF1. Chemokine binding does not activate G-protein-mediated signal transduction but instead induces beta-arrestin recruitment, leading to ligand internalization and activation of MAPK signaling pathway. Required for regulation of CXCR4 protein levels in migrating interneurons, thereby adapting their chemokine responsiveness. In glioma cells, transduces signals via MEK/ERK pathway, mediating resistance to apoptosis. Promotes cell growth and survival. Not involved in cell migration, adhesion or proliferation of normal hematopoietic progenitors but activated by CXCL11 in malignant hemapoietic cells, leading to phosphorylation of ERK1/2 (MAPK3/MAPK1) and enhanced cell adhesion and migration. Plays a regulatory role in CXCR4-mediated activation of cell surface integrins by CXCL12. Required for heart valve development. Regulates axon guidance in the oculomotor system through the regulation of CXCL12 levels. This Rattus norvegicus (Rat) protein is Atypical chemokine receptor 3.